A 175-amino-acid chain; its full sequence is NADH dehydrogenase [ubiquinone] iron-sulfur protein 4, mitochondrial (175 aa).

Residues 1-42 constitute a mitochondrion transit peptide; sequence MAAVSMSVALRQALWGRRVATVAAVSVSKVSTRSLSTSTWRL. The interval 149–175 is disordered; sequence ERKVPKPKSKSYGANFSWNKRTRVSTK. A Phosphoserine modification is found at Ser173.

It belongs to the complex I NDUFS4 subunit family. In terms of assembly, mammalian complex I is composed of 45 different subunits. This is a component of the iron-sulfur (IP) fragment of the enzyme. Interacts with BCAP31 and TOMM40; the interaction mediates its translocation to the mitochondria; the interaction with BCAP31 is direct. In terms of processing, phosphorylated.

The protein localises to the mitochondrion inner membrane. Functionally, accessory subunit of the mitochondrial membrane respiratory chain NADH dehydrogenase (Complex I), that is believed not to be involved in catalysis. Complex I functions in the transfer of electrons from NADH to the respiratory chain. The immediate electron acceptor for the enzyme is believed to be ubiquinone. This chain is NADH dehydrogenase [ubiquinone] iron-sulfur protein 4, mitochondrial (NDUFS4), found in Bos taurus (Bovine).